Consider the following 267-residue polypeptide: MSNPRPHLLIIDALNLIRRLHAVQAQQALTPAQALIATRANLINTCRKLLAASEPTHVIAVFDGEVHSWRKEVYPAYKEGRTPMPTELREGLNELQDAFWECGVDALLSQTDEADDLIATLATGIAQHGARATIISTDKGFCQLICPQIQIRDYFNKRWLDAAFVEQQYGVAPAQLVDFWALTGIGGSNIKGVPGIGPKTATQLLQQYGDLASLLAACQQEDAAKALLKLRQHQDEALLAQRLVRLQRDIPLGFNLREIRYPPAPEA.

Residue D115 coordinates Mg(2+). In terms of domain architecture, 5'-3' exonuclease spans 171–261; that stretch reads VAPAQLVDFW…LGFNLREIRY (91 aa). L182, V193, and I196 together coordinate K(+). Residues 195-200 form an interaction with DNA region; it reads GIGPKT.

It belongs to the Xni family. Mg(2+) is required as a cofactor. K(+) serves as cofactor.

Its function is as follows. Has flap endonuclease activity. During DNA replication, flap endonucleases cleave the 5'-overhanging flap structure that is generated by displacement synthesis when DNA polymerase encounters the 5'-end of a downstream Okazaki fragment. The polypeptide is Flap endonuclease Xni (Aeromonas hydrophila subsp. hydrophila (strain ATCC 7966 / DSM 30187 / BCRC 13018 / CCUG 14551 / JCM 1027 / KCTC 2358 / NCIMB 9240 / NCTC 8049)).